The chain runs to 185 residues: Peptidyl-tRNA hydrolase (185 aa).

Tyr14 lines the tRNA pocket. The active-site Proton acceptor is the His19. Tyr64, Asn66, and Asn112 together coordinate tRNA.

This sequence belongs to the PTH family. Monomer.

The protein resides in the cytoplasm. It carries out the reaction an N-acyl-L-alpha-aminoacyl-tRNA + H2O = an N-acyl-L-amino acid + a tRNA + H(+). Hydrolyzes ribosome-free peptidyl-tRNAs (with 1 or more amino acids incorporated), which drop off the ribosome during protein synthesis, or as a result of ribosome stalling. In terms of biological role, catalyzes the release of premature peptidyl moieties from peptidyl-tRNA molecules trapped in stalled 50S ribosomal subunits, and thus maintains levels of free tRNAs and 50S ribosomes. The sequence is that of Peptidyl-tRNA hydrolase from Lactiplantibacillus plantarum (strain ATCC BAA-793 / NCIMB 8826 / WCFS1) (Lactobacillus plantarum).